The chain runs to 105 residues: N(4)-acetylcytidine amidohydrolase (105 aa).

One can recognise an ASCH domain in the interval 7–93 (TFFERFEHDI…VIAEIYPGLE (87 aa)). Lys21 acts as the Proton acceptor in catalysis. Residue Thr24 is the Nucleophile of the active site. Catalysis depends on Glu74, which acts as the Proton donor.

The protein belongs to the N(4)-acetylcytidine amidohydrolase family.

It carries out the reaction N(4)-acetylcytidine + H2O = cytidine + acetate + H(+). The enzyme catalyses N(4)-acetyl-2'-deoxycytidine + H2O = 2'-deoxycytidine + acetate + H(+). It catalyses the reaction N(4)-acetylcytosine + H2O = cytosine + acetate + H(+). Catalyzes the hydrolysis of N(4)-acetylcytidine (ac4C). The polypeptide is N(4)-acetylcytidine amidohydrolase (Shewanella baltica (strain OS155 / ATCC BAA-1091)).